Reading from the N-terminus, the 229-residue chain is Putative N-acetylmannosamine-6-phosphate 2-epimerase 2 (229 aa).

It belongs to the NanE family.

The catalysed reaction is an N-acyl-D-glucosamine 6-phosphate = an N-acyl-D-mannosamine 6-phosphate. Its pathway is amino-sugar metabolism; N-acetylneuraminate degradation; D-fructose 6-phosphate from N-acetylneuraminate: step 3/5. Its function is as follows. Converts N-acetylmannosamine-6-phosphate (ManNAc-6-P) to N-acetylglucosamine-6-phosphate (GlcNAc-6-P). The sequence is that of Putative N-acetylmannosamine-6-phosphate 2-epimerase 2 (nanE2) from Salmonella typhimurium (strain LT2 / SGSC1412 / ATCC 700720).